Consider the following 1021-residue polypeptide: MSSDIRKWFMKAQDKNGGAAKPAGTTALAKKPVLSIPEKPSAAPSMAACDQDCSARRKTSKYFASKTEKEEDTSAGKGTGRGLPKRKLQKVSDELEDDMKPLPAKEVHKEEEDDDDDDFVAPSKRKTPVKPPPSKKLKGASTAEAHGKTGLDDDNEDKMDEDAKTPSKASGSGRGRGRGRGRGGRGAGAAHGKTIGLDDDGEEDKMDEDAKTPSKAAGRGRGGASGGRGRGGGGRGFMNFGERKDPPHKGEKEVPEGAPDCLTGLTFVISGTLDSLEREEATDLIKRYGGRVTGSISKKTNYLLADEDVGGVKSNKAKELGVPFLTEDGLFDMIRKSKPAKATVAKHQSDKNSEKQQKSPMKSSPVKVERRDGNQITTGKNISPKSNKGSASIDNQKVNIVDRGSLQWTEKYRPKVPNDIVGNQSMVKQLHDWLRSWEDQFLHSGQKGKGKKQADSGAKKAVLLSGPPGIGKTTTAKVVSQMLGLQAIEVNASDSRGKADSKIEKGVGGSTSNSIKELISNATLNYSNNRLKRPKAVLVMDEVDGMSAGDRGGVADLIASIKMSKIPIICICNDRYSQKLKSLVNYCLLLNFRKPTKQQMGKRLMEIAKKEGLQAQENAMEELAERVHGDIRMALNHLQYMSLSQSVVKYDDIRQRLNSSTKDEDISPFTAVDKLFGFNGGRLRMDERIDLSMSDPDLVPLIIQENYINYRPITVGKDDSGVKRMNFLARAAESIADADIVNVQIRRYRQWQLSQAACLSSSIVPAALMHGNREILEAGERNFNRFGGWLGKYSTTNKNIRLLEDAHSHILASQQANLDRESLRLDYLTLLLRQLTDPLKTMPKDEAVQKVVEFMDTYSLSQEDFDTIVELSKFKGHPNPMDGIQPAVKSALTKAYKQGSSSRVVRAADLVNIPGMKKPLKKRVAAILEPVGESLPEENGVASSEGDEEDSSDAENNDELVPGDTKPKLDLQSDKKKGIQVQLDLKSNGNGLNSKKMPAGRSKASGSAGKAAGGSGGKRKR.

2 disordered regions span residues 1 to 259 and 339 to 392; these read MSSD…EGAP and PAKA…GSAS. The segment covering 90–110 has biased composition (basic and acidic residues); the sequence is KVSDELEDDMKPLPAKEVHKE. Basic residues predominate over residues 123–138; that stretch reads SKRKTPVKPPPSKKLK. Residues 197-207 are compositionally biased toward acidic residues; sequence LDDDGEEDKMD. Positions 219–236 are enriched in gly residues; sequence RGRGGASGGRGRGGGGRG. Composition is skewed to basic and acidic residues over residues 241–255 and 347–357; these read GERK…KEVP and HQSDKNSEKQQ. The BRCT domain maps to 257 to 347; sequence GAPDCLTGLT…KPAKATVAKH (91 aa). Over residues 374 to 392 the composition is skewed to polar residues; the sequence is NQITTGKNISPKSNKGSAS. 465–472 lines the ATP pocket; it reads SGPPGIGK. The segment at 931–1021 is disordered; that stretch reads VGESLPEENG…AGGSGGKRKR (91 aa). Residues 945-958 are compositionally biased toward acidic residues; that stretch reads EGDEEDSSDAENND. Basic and acidic residues predominate over residues 965–977; sequence TKPKLDLQSDKKK. Positions 999-1010 are enriched in low complexity; the sequence is AGRSKASGSAGK. Over residues 1011-1021 the composition is skewed to gly residues; that stretch reads AAGGSGGKRKR.

This sequence belongs to the activator 1 large subunit family. In terms of assembly, heterotetramer of subunits RFC2, RFC3, RFC4 and RFC5 that can form a complex with RFC1. Expressed in roots, leaves, shoot apical meristem (SAM), flag leaves and panicles.

The protein localises to the nucleus. Its function is as follows. May be involved in DNA replication and thus regulate cell proliferation. In Oryza sativa subsp. japonica (Rice), this protein is Replication factor C subunit 1 (RFC1).